The chain runs to 120 residues: ATP-dependent Clp protease adapter protein ClpS (120 aa).

Residues 9 to 32 (LTFNQDHPAEHEDDSSGIAVQESK) form a disordered region.

The protein belongs to the ClpS family. As to quaternary structure, binds to the N-terminal domain of the chaperone ClpA.

Its function is as follows. Involved in the modulation of the specificity of the ClpAP-mediated ATP-dependent protein degradation. This is ATP-dependent Clp protease adapter protein ClpS from Ectopseudomonas mendocina (strain ymp) (Pseudomonas mendocina).